A 328-amino-acid polypeptide reads, in one-letter code: Tetraacyldisaccharide 4'-kinase (328 aa).

55–62 (TAGGNGKT) contributes to the ATP binding site.

Belongs to the LpxK family.

The enzyme catalyses a lipid A disaccharide + ATP = a lipid IVA + ADP + H(+). The protein operates within glycolipid biosynthesis; lipid IV(A) biosynthesis; lipid IV(A) from (3R)-3-hydroxytetradecanoyl-[acyl-carrier-protein] and UDP-N-acetyl-alpha-D-glucosamine: step 6/6. In terms of biological role, transfers the gamma-phosphate of ATP to the 4'-position of a tetraacyldisaccharide 1-phosphate intermediate (termed DS-1-P) to form tetraacyldisaccharide 1,4'-bis-phosphate (lipid IVA). This is Tetraacyldisaccharide 4'-kinase from Escherichia coli O45:K1 (strain S88 / ExPEC).